The chain runs to 404 residues: Cysteine desulfurase IscS (404 aa).

Pyridoxal 5'-phosphate is bound by residues 75-76 (AT), Asn155, Gln183, and 203-205 (SAH). At Lys206 the chain carries N6-(pyridoxal phosphate)lysine. Residue Thr243 participates in pyridoxal 5'-phosphate binding. The Cysteine persulfide intermediate role is filled by Cys328. Cys328 is a binding site for [2Fe-2S] cluster.

This sequence belongs to the class-V pyridoxal-phosphate-dependent aminotransferase family. NifS/IscS subfamily. As to quaternary structure, homodimer. Forms a heterotetramer with IscU, interacts with other sulfur acceptors. It depends on pyridoxal 5'-phosphate as a cofactor.

The protein resides in the cytoplasm. The enzyme catalyses (sulfur carrier)-H + L-cysteine = (sulfur carrier)-SH + L-alanine. Its pathway is cofactor biosynthesis; iron-sulfur cluster biosynthesis. In terms of biological role, master enzyme that delivers sulfur to a number of partners involved in Fe-S cluster assembly, tRNA modification or cofactor biosynthesis. Catalyzes the removal of elemental sulfur atoms from cysteine to produce alanine. Functions as a sulfur delivery protein for Fe-S cluster synthesis onto IscU, an Fe-S scaffold assembly protein, as well as other S acceptor proteins. The chain is Cysteine desulfurase IscS from Pseudomonas fluorescens (strain ATCC BAA-477 / NRRL B-23932 / Pf-5).